A 698-amino-acid polypeptide reads, in one-letter code: Probable xyloglucan glycosyltransferase 2 (698 aa).

The next 2 helical transmembrane spans lie at glycine 124–tryptophan 144 and isoleucine 190–isoleucine 210. Aspartate 272 is a catalytic residue. Residues aspartate 331 and aspartate 333 each coordinate substrate. Residue aspartate 425 is part of the active site. A run of 4 helical transmembrane segments spans residues leucine 503–valine 523, leucine 528–serine 548, leucine 653–leucine 668, and isoleucine 673–isoleucine 693.

The protein belongs to the glycosyltransferase 2 family. Plant cellulose synthase-like C subfamily.

It is found in the golgi apparatus membrane. Functionally, probable beta-1,4-glucan synthase rather involved in the synthesis of the xyloglucan backbone than cellulose. Seems to work simultaneously with xyloglucan 6-xylosyltransferase. Xyloglucan is a noncellulosic polysaccharides of plant cell wall and consists of a glucan backbone substituted by xylose, galactose and fucose. This is Probable xyloglucan glycosyltransferase 2 (CSLC2) from Oryza sativa subsp. indica (Rice).